The chain runs to 7785 residues: MSSADVAATIVRLYESAVEAHPDKPVINDGHRVWSYRELNSAANRIAWWLIGRGVGPEQTVGVALDRGIDQIAALLGTLKAGAVYLPLDPVLPAERINYLLADATPSLILDGDAAASAGQPEDTPAVPLTSDSLAYVIYTSGSTGTPKGVGVTHGSMVNLARTVTGQYALGDTPRVLQLASLGFDVAIWELLTAVATGGTLVVSQADQLSGDDLLRVLREQRITHVTLPVPVLASLPPDAENQLPDLTTVHIGGETCPPELVRRWSAGRRLINGYGATETTVAATLTPPLTGPDAPIGKAIDGTRVYVLDDTLAQVVLGAAGELYVAGANVARGYLRRPGLTASRFLADPYGPPGSRMYRTGDVGLIRPDGQLEFLRRADDQVKIRGARVEPGELEAVLQRRTDVVHAAVTVRPDARGERQLVAYVVPAAAATGAAELRDDLRGTLPSYLVPSSVVLLDSLPLTPNGKVDRDALPDPEYAPAGLDRTARSPLEDMLRVVFAEILELPQVGFDDDFFDLGGHSLLAGRLIGRIRGTLGLEVHMKDFFEKSTPAALASYLQRQETGPARPELTRLPRPDRIPLSFAQQRLWFLHRLEGPSATYNMPLALHLTGKVDTGALAAALTDVIRRHEPLRTLIREVDGQPYQQILDPEEVRPALPVRQVGAAQLDEELRRSARHEFDLARQIPVRAELLTVSPDESVLMLVIHHIAGDGWSGAPLARDLVTAHSARLTGVAPQWPPLPVQYADYTLWQRAMLGGEEEPASPLNEQLRYWREQLADLPHEITVPGDRPRPAVATYRGGVVPITMDADLHAGITELARRNGATVYMVLQSTVTALLTRLGAGTDVAIGAGVAGRSEPALDDLVGLFVNMLVLRTDTAGSPRFTELLQQVRDTSLGAYGHQDIPFEQLVESLNPHRVAGRQSLFQVALVLQNNTSVPFDLPGLRVRAEQIPTGTARFDLSLSVTEHGDGISGTVEYAADLYDRATAEAVVERWIQLIRQVVADPARRVDTLDVTTPGDESRLAGWRRYERDVPPVTFGDLFARQVAATPDAIAVSDGGDVWTYREVNRYANHVADRLIDRGIGPEDFVAVAMPRSARLVASLLGVLKAGAAYVPVDLVFPARRNRHVIIDSNPRLVLTSRAGAENLPADLPCELVMIDAWGTGREDGPADADRVRPSNVDSPAYVIYTSGSTGQPKGVVVTHRGLAAFAETLRERCAAGPNDRVLQLSSPSVDASVLEMVWAFSSGARLVIASQYRLAGEELAQALAEQRITHAHIPPSALSTIPAEAAGRLPEFRRLSVGAESCPSELVRLWLPGRDFVNAYGPTECTVAASHTFPLAEARAPIGRPVIDAELYVLDETLRPAAPGVPGELYIGGAGLARGYLRRGGLTASRFVANPYGEPGSRVYRTGDVVRWNTDGELEYLGRSDEQVKVRGFRVEPGEVERVLASQPSVDRAVVVPRRDRSGAVSLAAYVVLAAASPAGFDDQLSEWNDIYDQVYAGFSGDAGNDFIGWTSSFTGGPIPIEEMREWQRSAVDAVRRFGRGRVLEIGSGSGLLMTPLADAVDEYWGTDLSEISIDRLRAFADARRWNHVRLSCQPAHDVSGLPRRYFDTVVINSVVQYFPSADYLRDVLAKVVDLLADGGRVIVGDVRHYGLLRVFHAAVHDFRGTEGLRAAVEHAMAVEKELLLAPEFFTSIDHPAVTGVEVTLKAGQASNELTGYRYEVVLHTAPARRLTTLPVLVWGRDTTDLDEVTGPARVTGIPNPRLAGGVAAVRLLDGMDAVPPAAGPELESEAVRRWAVQRGMRAVPTWSSNRWNTYDVVLIHAAEAEPLADVYRPADGVEPANVPEVARTAGKLVSELRSTVQGLLPDYMVPATITPIERIPVTPNGKIDRRALPDPEVVLSRGRHARTPLEQILCELYADILGLERVGVDDSFFDRGGHSLLATRLTSRIRSVLGVEALLQQVFAAPSPAELAVVLSEQQGRVQQALEPVARPEVLPLSFAQQRLWFLHKLEGPSATYNSPLALRLSGTLEVTALRAALGDVVGRHEALRTVFAETDGVPYQKVLDVADVDLSVREVAADELPGVLRDAARYEFDLAREIPVRAWLFAAGPGEWVLMLVLHHIAADGWSLGPLARDLATAYADRRMGRGPSWSPLPVQYADYTLWQRRLLGDEADPDSVFGRQLAYWRGQLAGLPQQVTLPTDRPRPQTASYAGDVTMFRLDAGLHADLLRLARTSGATLFMVLQAALVAVLTRLGAGDDVPLGSPIAGRSDDGLDDLVGFFVNTLVLRADTSGNPGFDELLERVRDTSLEAYAHQDVPFEFLVEKLNPHRSTAHSPLFQVLLAFQNNSDTSFHLPGLRAEREEIGTRVSRVDLTLNITEAFGVNGAPQGIRGAVEYATDLYDARTVESFAARFVRMLQAAVADPSRRINAVDLLSDEENATVLALSGRDAAVPESRVWPAVFEATAAAAPDATAVVEGQLSWTYAQLNANANRLARYLIDRGVGPEDVVGVLMPRSAMQIATVLAIGKAGAAFLPIDPAYPAERVEYLIADARPKMLLADTAHVGVAAGAIAIDEPAVATALREAPVTDPAGVAVRLEHPAYVIYTSGSTGRPKGTIVTHSGLAALAVSGCERAAVDRDSRVLQLTSPSFDVSVFEFLAAFHAGAVLVMPEPGRLAGEELAELLADAGVSHAFVPPSVLATLPDEAPGRLAGLRSLVVGGEACSADLVRRWSVGRRMTNLYGPTETTVAASISRPMSTGAHPIGAPLPGTRVYVLDANLRPVPPGARGELYISGIGVARGYLGRPVLTASRFVADPFGPAGARAYRTGDVVRWNADGELEYFGRSDHQLKIRGFRVEPGEIEAALVRRPSVAQAVVVARPDQHGFQALYAYVTAGAEPADAARLREELRAELPDYLVPAAIVVLDEFPLNANGKLDRNALPEPRFVTSAADIRSPGMPQEEILRSVFADVLGIERISADDNFFDLGGHSLLVTRLISRVRGTLGVDVSMQTFFNAPTPRQLAGQLLEGGPVPARLQPVPRPEALPLSFAQQRLWFLHKLEGPSATYNSPLAIKLSGELDVDALRLALADVVVRHEALRTVFAERAGNPYQRILDSAEVELPVREVPQSKLPDALREAARYEFDLAREIPLRAWLFTAGPGEWVLMLALHHVVADGWSLQVLVSNLTAAYTSRRAGHAPSWQPLPVQYADYTLWQRRHLGTEDDPDSVSSRQVSYWLEQLADLPDQVTLPTDRPRPAVASYRGETVTFDLDAEEHAELVRLARETGTTLFMILQAALAGLLTRLGAGTDIAIGSPIAGRTDDRLENLIGLFVNMLVLRTDTGGDPTLGELLTRVRETSLAAYAHQHMPFEYLVERLNPHRSAAHHPLVQILFGLQNTAEQNVSLPGVTASGMSVDTGVSRVDLSINIVEASAPDGSPAGLTGLVEFSTDLYDRATVEAFAARWVRVLRAMVVAPGSRLSGVQLLGADERVRLLQRWGAASGPVAAVTLAELFERRVAARPDAVAVVEGEVSWSYARLNAYANRVAWSLVERGVGVEDVVAVVLPRGAVQVATVLGVVKAGAAYLPVDPSYPRARVEYLLQDAGPALVIGESDVFDGQPEHDPVRPVPVDAAAYVIYTSGSTGQPKGVVVTHRGLASMAATQQRLGAGEGSRVLQFAALGFDATVWELVMALGAGAALVVPKTDQLAGEDLAAVLREQRITHLTLPPTVLATVPADRLPDLGTLVVAGEACPPELTARWSPGRRMFNAYGPTESTVCASISAELSPGLAPIGGPVLNTRLYVLDDALQPAASGVPGELYIAGEGLARGYRGRAGLTATRILADPYGPVGSRMYRTGDVVRWNADGDLEYLGRSDEQVKIRGFRVEPGEVASVLLRHPAVAQAAVIVRLEQLLAYAVPALGRAVRDGELRAYLQDELPEHTVPSAVVLLDEIPRTSHGKVDQRALPDPEQAGGRGRAPRTPQEELLCVLFAQVLDVQQVGPDDSFFDLGGHSLLATRLIIRIRRAFRCELPPRALFAAPSPAELAVVLSEQQGRVQQALEPVARPEVLPLSFAQQRLWFLHKLEGPSATYNSPLALRLSGTLEVTALRAALGDVVGRHEALRTVFAETDGVPYQKVLDVADVDLSVREVAADELPGVLRDAARYEFDLAREIPVRAWLFAAGPGEWVLMLVLHHIAADGWSLGPLARDLATAYADRRMGRGPSWSPLPVQYADYTLWQRRLLGDEADPDSVFGRQLAYWRGQLAGLPQQVTLPTDRPRPQTASYAGDVTMFRLDAGLHADLLRLARTSGATLFMVLQAALVAVLTRLGAGDDVPLGSPIAGRSDDGLDDLVGFFVNTLVLRADTSGNPGFDELLERVRDTSLEAYAHQDVPFEFLVEKLNPHRSTAHSPLFQVLLAFQNNSDTSFHLPGLRTRLEGVSTGLSRVDLFISLAEQPDAGGVIGAVEYATDLYDAATVEAFVGRWLRFLAAVAHDPEQRIGSVDLLLDGERERLTGWAYTEPEVEPATLSELFERRVAARPDAVAVVEGEVSWSYARLNAYANRVAWSLVERGVGVEDVVAVVLPRGAVQVATVLGVVKAGAAYLPVDPSYPRARVEYLLQDAGPALVIGESDVFDGQPEHDPVRPVPVDAAAYVIYTSGSTGQPKGVVVTHRGLAALATGTVGRNAVAGDSRVLLLASPSFDASVLELMIAIGAGAALVVSRESRLAGEELATLIAQARVTHAFVPPSVLATLPGAATGELPAFQGLVVGGEACSPDLVRRWSAGRRMTNLYGPTETTVATTVSRPLFGEAHPIGAPLPGWRVYVLDAGLHLVPPGSRGELYIGGVGLTRGYLRRAGLTASRFVADPFGPAGARMYRTGDVVRWNADGELEYLGRSDHQVQIRGIRVEPGEVQAALTAHPDVARAVVVVSDDRRGDPALVGYMVPERPGADPAAVREDLRRILPDHLVPVAIVVLPEIPLTPNGKLDRDALPDPEYETSRGREPRTPEEEILCGLFTEVLGLKQVGAEDDFFDLGGHSLLGTRLISGIRAKLGFEVRLLTLFEASTPAALARAMLEANAPARTALEPMPRPELLPLSFAQQRLWFLHKLEGPSPTYNMPLTLQLSGPLDVPALRAALTDVVGRHEALRTVFAEHDGQAYQRILDPVEIELPVHDAASDEALQAAARHRFDLAGEIPLRVSLYAAGPGEWVLMLVLHHIVADGWSLRPLARDLATAYAARTAGRAPDWAPPPVQYADYTLWHRELLGDDADPDSAFGRQLAFWRDRLADLPEQVTLPTDRPRPRVASYRGDVSTFQVDAELHAGLMALARQTGSTLFMVLQTALSALLTRSGAGTDVVVGAGVAGRTDERLDDLVGFFVNMVVLRTDTSDDPTFVELLQRVRASSLAAYAHQDIPFEYLVEKINPLRSASHQSLFQIAMVLQNNAEADFDLSGVRVWQEGRGTGTSRFDLSLSLTETTTADGRPTGVTGVVEFSTDLYDRATVEAFAARWVRVLRAMVVAPGSRLSGVQLLGADERVRLLQRWGAASGPVAAVTLAELFERRVAARPDAVAVVEGEVSWSYARLNAYANRVAWSLVERGVGVEDVVAVVLPRGAVQVATVLGVVKAGAAYLPVDPSYPRARVEYLLQDAGPALVIGESDVFDGQPEHDPVRPVPVDAAAYVIYTSGSTGQPKGVVVTHRGLSGLAATLRQRCAADVDSRILQASSPSFDAAVLELVWAWDSGAALVIASADRLAGDELARALADHRITHALIPPSVLSTLAADAPRTLTDFRTLIVGAEACPPELLRRWAPGRRMVNAYGPTEATVVASQTGELHEPPVSIGKPALGTRLYVLDERLGLAAPGVPGELYIAGAGVARGYRTRPSLTASRFLADPYGPAGTRMYRTGDLVRWNADGDLEYLGRSDEQVKIRGFRVEPGEVERVLAAQPSVARAVVVPRPDRSGAVSLAAYVVLADQGSATDFDDQLDEWRSIYHEVYSGLAREPGTDFAGWNSSFTGTPIPIEQMREWQRSAVEQVARFGPRRVLEIGAGSGLLMVPLIERTEEYWATDFSAAAVERLREYARERGWEHAHLRCQPAHDMWGLPRSHFDTIVLNSVVQYFPSTDYLRDVLGKALDLLADGGRLVVGDVRHHGLLRAMHTAVQEFRNPGSGSSAVDHAVAIEKELLLAPEFFTAFRHPRATGVEVLLKRGSADNELTAYRYEVVLHTGATRPVGDLPELVWGHDVTDLADVTAPARLTRIPNPRLVGINEPRLHPEQVRRWAAERSWRAVPTWSPRNWDGYDVVLLAADEDEALTDVYRPGTPEVVANVPAVARTAGEHVSELRGTIKSLLPDHMVPATITPIERIPLTPNGKIDRRALPEPEIVTTTTEERGPRDPYEEILCELYADLLGLPRVGVDESFFDLGGHSLLATRLTSRIRAVLGIEVPLQQVFAASTPAQLAAVLAQGSGRAGPALEPAPRPEVLPLSFAQQRLWFMQNLEGASATYNSPLAVRLSGALDVAAMRAALGDVLARHEVLRTVFGERRGEPYQRILDAVEIDLPVRAVAEGDLTQVLRDASRHEFDLSREIPVRASLFNTGRDEWVLLLVVHHVAVDGWSMRPLTRDLTTAYEQRAAGRVPDWAPLRVQYADFALWQHRMLGDEADPDSRLSRQLAYWRDQLAGLPRLVTLPADRPRPDEASHRGAMLTRNLDADLHQALRVLARRHGSTLFMALQAALGAQLSRSGAGTDIPVGAPIAGRADDALEDLVGFFINTLVLRIDTSGRPSFTRLLKQVRETSLAAYAHQDVPFDHLVEKLNPDRSPGQHPLFQVQLVLQNTPDAEFELAGLTARPQLDGVETGVSRVDLSVNAIETFDDHGLPAGLILVVEYATDLYDSATVDAFLDEFGQLLHEVADSPDQPIGGLELDNIAAPVPGTLPQLFETWAAATPSAIAVTDGAADMTYAELNSRANRMARALIDRGAGPEDLVAVLLPRSVRQVATILAIAKSGAAYLPIDPTYPADRVAYLCADALPKLIVTDAAGSARLGADQPVIDVDDPATVAQWESRPDTDPTDRDRTTALGLDHPAYVIYTSGSTGRPKGAVITQAGLAGAAEAWVQRWGFEPGSRVLQLSSPSFDASIMDFIVAFAAQGTLVLPEPGLIAGEALARVLTEKRITHLVTLPSVLASMPVDVAGRLTGLRGLLLGGEVLTPDLAARWSPGRRMINVYGQTETTVACTMTDPLAGERVTVGRPIPGTRVYVLDALLRVVPPGTDGELYVAGPAVGRGYLHRAGLTASRFVADPYGPPGSRMYRTGDLGRLNYAFELEYAGRTDEQVKIRGMRVEPGEVEAALAEHPAVARAAVAVRADRQGDLALFGYVIPVQAGADVSGIREDLRRSLPEHLVPAVMTAMTDFPLTPNGKVDRDALPAPQVTAPVGRGPRTPQEEILCGLFAELLGLGQIGVEDNFFDLGGHSLLANKLIARIAEVMGTEIPIRTFFAGPTVAQLAEQLGSDGTDRAFDVLLPLRTGGTLPPLFCIHPGAAICWSYADLLLHLSPDFPVYGLQSPALSHPDELPETLIQVADDCIEEMRQVQKTGPYYLLGQSFGGVVAHAMAARLEAAGEQVGLIVALDSEPSRSLSEHEQAQVIEATAKVYTGILEVLGVDPAALPSGNLTFAQFSELARTTNTLLGNVAEDEFHLLMAILHGNISIATRHRSERVDADMLIFGAAEERERVLDPEVWREFVGGEITYHPIPTSHSTIMAPEALQVIGPILEQHLRAVIAGNATTKEEN.

Carrier domains lie at Thr-487–Glu-562, His-1908–Gln-1983, and Ser-2958–Gly-3033. Ser-522, Ser-1943, and Ser-2993 each carry O-(pantetheine 4'-phosphoryl)serine. An LRR 1 repeat occupies Arg-3088–Asn-3111. 3 Carrier domains span residues Ala-3978 to Gln-4053, Glu-5002 to Asn-5077, and Gly-6389 to Ser-6464. An O-(pantetheine 4'-phosphoryl)serine mark is found at Ser-4013, Ser-5037, and Ser-6424. The LRR 2 repeat unit spans residues Thr-6853–Ala-6875. A Carrier 7 domain is found at Gly-7432–Gly-7507. Residue Ser-7467 is modified to O-(pantetheine 4'-phosphoryl)serine.

Pantetheine 4'-phosphate serves as cofactor.

Its function is as follows. Probable non-canonical nonribosomal peptide synthetase (NRPS); part of the gene cluster that mediates the biosynthesis of cyclic heptapeptides, known as cyclomarins and also of cyclic dipeptides, called cyclomarazines, which have both antimicrobial and cytotoxic effects. First, CymD catalyzes the reverse N-prenylation of monomeric L-tryptophan with dimethylallyl diphosphate (DMAPP) to form N-(1,1-dimethylallyl)-tryptophan (r-N-DMAT). The N-(1,1-dimethylallyl)-tryptophan produced by CymD is then combined with a range of standard and nonproteinogenic amino acid substrates to synthesize the peptides, a process that is probably catalyzed by the non-canonical nonribosomal peptide synthetase (NRPS), CymA. Other proteins in the cluster catalyze further modifications of the peptides including CymV which catalyzes the oxidation of olefinic cyclomarins and cyclomarazines to their respective epoxide derivatives. This chain is Probable non-canonical nonribosomal peptide synthetase (NRPS) CymA, found in Salinispora arenicola (strain CNS-205).